We begin with the raw amino-acid sequence, 400 residues long: Subtilisin-like protease 7 (400 aa).

Positions 1-20 are cleaved as a signal peptide; sequence MGFITKAIPLALAAASVING. A propeptide spanning residues 21 to 119 is cleaved from the precursor; the sequence is AEILETRAGV…IERDARVQIN (99 aa). In terms of domain architecture, Inhibitor I9 spans 36 to 118; sequence KYIVVMNDGI…YIERDARVQI (83 aa). The Peptidase S8 domain occupies 129–400; that stretch reads SWGLARVGSK…SKLINNGSGM (272 aa). Residues Asp-161 and His-192 each act as charge relay system in the active site. Residue Asn-252 is glycosylated (N-linked (GlcNAc...) asparagine). The Charge relay system role is filled by Ser-346. N-linked (GlcNAc...) asparagine glycosylation is present at Asn-396.

Belongs to the peptidase S8 family.

It is found in the secreted. Secreted subtilisin-like serine protease with keratinolytic activity that contributes to pathogenicity. The sequence is that of Subtilisin-like protease 7 (SUB7) from Trichophyton violaceum.